We begin with the raw amino-acid sequence, 272 residues long: uncharacterized protein (272 aa).

Glu163 is an active-site residue.

It belongs to the glycosyl hydrolase 25 family.

This is an uncharacterized protein from Escherichia coli O157:H7.